We begin with the raw amino-acid sequence, 164 residues long: Protein HIT1 (164 aa).

Residues Cys-8, Cys-11, Cys-28, and Cys-32 each contribute to the Zn(2+) site. An HIT-type; degenerate zinc finger spans residues 8–49; it reads CGICRGVDGKYKCPKCGVRYCSLKCYKDAAKHVHKESEQPRA.

This chain is Protein HIT1 (HIT1), found in Saccharomyces cerevisiae (strain ATCC 204508 / S288c) (Baker's yeast).